Reading from the N-terminus, the 412-residue chain is Tyrosine--tRNA ligase (412 aa).

The short motif at 48–57 (PSRPDLHLGH) is the 'HIGH' region element. The 'KMSKS' region motif lies at 232 to 236 (KMSKS). Residue lysine 235 participates in ATP binding. An S4 RNA-binding domain is found at 342 to 405 (VGLLNLMRHA…GKRRFARIRP (64 aa)).

Belongs to the class-I aminoacyl-tRNA synthetase family. TyrS type 2 subfamily. As to quaternary structure, homodimer.

Its subcellular location is the cytoplasm. The enzyme catalyses tRNA(Tyr) + L-tyrosine + ATP = L-tyrosyl-tRNA(Tyr) + AMP + diphosphate + H(+). Its function is as follows. Catalyzes the attachment of tyrosine to tRNA(Tyr) in a two-step reaction: tyrosine is first activated by ATP to form Tyr-AMP and then transferred to the acceptor end of tRNA(Tyr). This chain is Tyrosine--tRNA ligase, found in Salinibacter ruber (strain DSM 13855 / M31).